The sequence spans 349 residues: Putative transport protein jhp_0514 (349 aa).

The next 8 helical transmembrane spans lie at 6–26, 27–47, 56–76, 143–163, 195–215, 224–244, 258–278, and 300–320; these read FFWI…QDFL, MDAL…VFLN, SFLC…FIVY, LKLV…FYYG, VLLT…TMII, LGIL…LIWI, EAIF…DSVI, and ILIF…GIIV.

It belongs to the autoinducer-2 exporter (AI-2E) (TC 2.A.86) family.

The protein resides in the cell membrane. The sequence is that of Putative transport protein jhp_0514 from Helicobacter pylori (strain J99 / ATCC 700824) (Campylobacter pylori J99).